Consider the following 787-residue polypeptide: Zinc finger protein 227 (787 aa).

Positions 23-94 (VTFKDVAVVF…ERETQRNGHS (72 aa)) constitute a KRAB domain. 18 C2H2-type zinc fingers span residues 243–275 (HPCR…LQTH), 312–334 (YRCD…YRTH), 340–362 (YRCE…QRVH), 368–390 (YKCE…QRVH), 396–418 (YKCE…QRVH), 424–446 (YKCD…RRVH), 452–474 (YRCE…FRVH), 480–502 (YTCK…QNVH), 508–530 (FKCE…QRVH), 536–558 (YRCD…QVIH), 564–586 (YTCE…QRVH), 592–614 (YKCE…QRVH), 620–642 (YKCG…QRVH), 648–670 (YKCD…QRGH), 676–698 (YKCE…QRVH), 704–726 (HKCE…LSVH), 732–754 (FKCE…QRVH), and 760–782 (YKCN…QKVH).

This sequence belongs to the krueppel C2H2-type zinc-finger protein family.

It is found in the nucleus. Its function is as follows. May be involved in transcriptional regulation. The polypeptide is Zinc finger protein 227 (ZNF227) (Bos taurus (Bovine)).